A 497-amino-acid chain; its full sequence is Gasdermin-E (497 aa).

The membrane targeting domain stretch occupies residues 1–56 (MFAKATRSFLREVDAEGDLIAVSNLNDSDKSQLLSLVTKKKRFWCWQRPKYQFLSV). Cysteine 45 is modified (S-(2-succinyl)cysteine). A Glycyl lysine isopeptide (Lys-Gly) (interchain with G-Cter in ubiquitin) cross-link involves residue lysine 120. 3 positions are modified to S-(2-succinyl)cysteine: cysteine 156, cysteine 168, and cysteine 180. Lysine 189 participates in a covalent cross-link: Glycyl lysine isopeptide (Lys-Gly) (interchain with G-Cter in ubiquitin). Cysteine 235, cysteine 371, cysteine 409, cysteine 418, and cysteine 491 each carry S-(2-succinyl)cysteine.

Belongs to the gasdermin family. Homooligomer; homooligomeric ring-shaped pore complex containing 27-28 subunits when inserted in the membrane. Post-translationally, cleavage at Asp-270 by CASP3 (mature and uncleaved precursor forms) or granzyme B (GZMB) relieves autoinhibition and is sufficient to initiate pyroptosis. Succination by the Krebs cycle intermediate fumarate, which leads to S-(2-succinyl)cysteine residues, inhibits processing by caspases, and ability to initiate pyroptosis. Succination modification is catalyzed by a non-enzymatic reaction caused by an accumulation of fumarate. In terms of processing, ubiquitinated on Lys-120 and Lys-189 via 'Lys-48'-linked polyubiquitin chains, leading to proteasomal degradation. Deubiquitinated by USP48, leading to increased stability. Post-translationally, palmitoylated.

The protein resides in the cell membrane. It is found in the cytoplasm. The protein localises to the cytosol. With respect to regulation, the full-length protein before cleavage is inactive: intramolecular interactions between N- and C-terminal domains mediate autoinhibition in the absence of activation signal. The intrinsic pyroptosis-inducing activity is carried by the released N-terminal moiety (Gasdermin-E, N-terminal) following cleavage by CASP3 or granzyme B (GZMB). Activated by NLRP1 in the absence of GSDMD expression: NLRP1 cleaves and activates CASP8, promoting downstream activation of CASP3 and subsequent activation of GSDME. Functionally, precursor of a pore-forming protein that converts non-inflammatory apoptosis to pyroptosis. This form constitutes the precursor of the pore-forming protein: upon cleavage, the released N-terminal moiety (Gasdermin-E, N-terminal) binds to membranes and forms pores, triggering pyroptosis. Pore-forming protein produced by cleavage by CASP3 or granzyme B (GZMB), which converts non-inflammatory apoptosis to pyroptosis or promotes granzyme-mediated pyroptosis, respectively. After cleavage, moves to the plasma membrane, homooligomerizes within the membrane and forms pores of 10-15 nanometers (nm) of inner diameter, allowing the release of mature interleukins (IL1B and IL16) and triggering pyroptosis. Binds to inner leaflet lipids, bisphosphorylated phosphatidylinositols, such as phosphatidylinositol (4,5)-bisphosphate. Cleavage by CASP3 switches CASP3-mediated apoptosis induced by TNF or danger signals, such as chemotherapy drugs, to pyroptosis. Mediates secondary necrosis downstream of the mitochondrial apoptotic pathway and CASP3 activation as well as in response to viral agents. Exhibits bactericidal activity. Cleavage by GZMB promotes tumor suppressor activity by triggering robust anti-tumor immunity. Suppresses tumors by mediating granzyme-mediated pyroptosis in target cells of natural killer (NK) cells: cleavage by granzyme B (GZMB), delivered to target cells from NK-cells, triggers pyroptosis of tumor cells and tumor suppression. May play a role in the p53/TP53-regulated cellular response to DNA damage. This Equus caballus (Horse) protein is Gasdermin-E.